Consider the following 207-residue polypeptide: Cytochrome c biogenesis ATP-binding export protein CcmA (207 aa).

The region spanning 2 to 204 is the ABC transporter domain; that stretch reads LECENLSCTR…TTIDIRNFNR (203 aa). 34–41 lines the ATP pocket; the sequence is GPNGSGKT.

Belongs to the ABC transporter superfamily. CcmA exporter (TC 3.A.1.107) family. As to quaternary structure, the complex is composed of two ATP-binding proteins (CcmA) and two transmembrane proteins (CcmB).

The protein localises to the cell membrane. It carries out the reaction heme b(in) + ATP + H2O = heme b(out) + ADP + phosphate + H(+). In terms of biological role, part of the ABC transporter complex CcmAB involved in the biogenesis of c-type cytochromes; once thought to export heme, this seems not to be the case, but its exact role is uncertain. Responsible for energy coupling to the transport system. This is Cytochrome c biogenesis ATP-binding export protein CcmA from Wolbachia pipientis wMel.